The primary structure comprises 398 residues: Keratinocyte differentiation factor 1 (398 aa).

2 disordered regions span residues 1–60 and 123–156; these read MPRP…SITF and AEAN…STMG. Residues 44–55 are compositionally biased toward basic and acidic residues; that stretch reads RPDPKDPGHHGP. S218 is modified (phosphoserine). Disordered stretches follow at residues 307 to 340 and 369 to 392; these read RKSR…TMVG and GAPG…SGAP. Residues 377-389 are compositionally biased toward polar residues; sequence HDSSFQGTDTDSS.

It is found in the cytoplasm. Its subcellular location is the cell junction. In terms of biological role, plays a role in the regulation of the epidermis formation during early development. Required both as an inhibitor of basal cell proliferation and a promoter of differentiation of basal progenitor cell progeny. The chain is Keratinocyte differentiation factor 1 (KDF1) from Homo sapiens (Human).